A 148-amino-acid chain; its full sequence is Large-conductance mechanosensitive channel (148 aa).

Helical transmembrane passes span V16–I36 and G89–V109.

It belongs to the MscL family. Homopentamer.

The protein localises to the cell inner membrane. Its function is as follows. Channel that opens in response to stretch forces in the membrane lipid bilayer. May participate in the regulation of osmotic pressure changes within the cell. This Paraburkholderia phytofirmans (strain DSM 17436 / LMG 22146 / PsJN) (Burkholderia phytofirmans) protein is Large-conductance mechanosensitive channel.